A 436-amino-acid chain; its full sequence is Adenylosuccinate synthetase (436 aa).

GTP-binding positions include 21 to 27 (GDEGKGK) and 49 to 51 (GHT). The active-site Proton acceptor is Asp-22. Mg(2+) contacts are provided by Asp-22 and Gly-49. Residues 22 to 25 (DEGK), 47 to 50 (NAGH), Thr-135, Arg-149, Gln-230, Thr-245, and Arg-309 each bind IMP. The active-site Proton donor is the His-50. Residue 305 to 311 (TTTGRPR) participates in substrate binding. GTP-binding positions include Arg-311, 337–339 (KVD), and 423–425 (SSG).

The protein belongs to the adenylosuccinate synthetase family. In terms of assembly, homodimer. Requires Mg(2+) as cofactor.

Its subcellular location is the cytoplasm. It carries out the reaction IMP + L-aspartate + GTP = N(6)-(1,2-dicarboxyethyl)-AMP + GDP + phosphate + 2 H(+). It functions in the pathway purine metabolism; AMP biosynthesis via de novo pathway; AMP from IMP: step 1/2. Plays an important role in the de novo pathway of purine nucleotide biosynthesis. Catalyzes the first committed step in the biosynthesis of AMP from IMP. The polypeptide is Adenylosuccinate synthetase (Thermoplasma volcanium (strain ATCC 51530 / DSM 4299 / JCM 9571 / NBRC 15438 / GSS1)).